A 979-amino-acid chain; its full sequence is UPF0182 protein MT0070 (979 aa).

A run of 7 helical transmembrane segments spans residues 19–41, 63–85, 114–136, 174–196, 208–230, 261–280, and 285–307; these read LVTA…DIYV, LAIV…LLAY, LFGW…FDWV, WLFV…FGGL, AARV…AYWL, LVLV…AIFL, and IPAM…WPLL. A disordered region spans residues 894-948; sequence VFGPGTGRVATXPGGDAASAPPPGAGGPAPPQGVPPPRTTQPPAAPPRGPDVPPA. A compositionally biased stretch (pro residues) spans 913-946; it reads APPPGAGGPAPPQGVPPPRTTQPPAAPPRGPDVP.

This sequence belongs to the UPF0182 family.

The protein resides in the cell membrane. The polypeptide is UPF0182 protein MT0070 (Mycobacterium tuberculosis (strain CDC 1551 / Oshkosh)).